The following is a 576-amino-acid chain: 4-alpha-glucanotransferase, chloroplastic/amyloplastic (576 aa).

The transit peptide at 1 to 52 directs the protein to the chloroplast; the sequence is MAIHTCFSLIPSSFSSPKLPYPKNTTFQSPIPKLSRPTFMFDRKGSFQNGTA.

It belongs to the disproportionating enzyme family. In terms of tissue distribution, present in leaves, stems, roots, and stolons but is most abundant in developing and mature tubers.

The protein localises to the plastid. Its subcellular location is the chloroplast. The protein resides in the amyloplast. The enzyme catalyses Transfers a segment of a (1-&gt;4)-alpha-D-glucan to a new position in an acceptor, which may be glucose or a (1-&gt;4)-alpha-D-glucan.. Its function is as follows. May act during starch breakdown to convert small oligosaccharides into larger molecules upon which starch phosphorylase can act, or may change the structure of starch molecules and grain architecture by modifying chain length, or may generate from starch and glucose oligosaccharides which can serve either as primers for new starch phosphoenzyme. The sequence is that of 4-alpha-glucanotransferase, chloroplastic/amyloplastic (DPEP) from Solanum tuberosum (Potato).